The primary structure comprises 183 residues: Triggering receptor expressed on myeloid cells 3 (183 aa).

An N-terminal signal peptide occupies residues 1–19 (MSPLLLWLGLMLCVSGLQA). The Extracellular segment spans residues 20–138 (GDEEEHKCFL…AWCQGKPVMV (119 aa)). The Ig-like V-type domain occupies 30–128 (EGENLTLTCP…VIILRQRIRL (99 aa)). Residue asparagine 33 is glycosylated (N-linked (GlcNAc...) asparagine). An intrachain disulfide couples cysteine 38 to cysteine 110. Residues 139–159 (IVLTCGFILNKGLVFSVLFVF) form a helical membrane-spanning segment. The Cytoplasmic portion of the chain corresponds to 160-183 (LCKAGPKVLQPSKTSKVQGVSEKQ).

Interacts with TYROBP/DAP12. As to expression, expressed in macrophages and in T-cells.

The protein localises to the cell membrane. Its function is as follows. Forms a receptor signaling complex with TYROBP/DAP12 which mediates activation of macrophages as part of the innate immune response. In Mus musculus (Mouse), this protein is Triggering receptor expressed on myeloid cells 3.